A 305-amino-acid chain; its full sequence is UDP-3-O-acyl-N-acetylglucosamine deacetylase (305 aa).

The Zn(2+) site is built by histidine 79, histidine 238, and aspartate 242. Catalysis depends on histidine 265, which acts as the Proton donor.

Belongs to the LpxC family. Zn(2+) is required as a cofactor.

It carries out the reaction a UDP-3-O-[(3R)-3-hydroxyacyl]-N-acetyl-alpha-D-glucosamine + H2O = a UDP-3-O-[(3R)-3-hydroxyacyl]-alpha-D-glucosamine + acetate. It functions in the pathway glycolipid biosynthesis; lipid IV(A) biosynthesis; lipid IV(A) from (3R)-3-hydroxytetradecanoyl-[acyl-carrier-protein] and UDP-N-acetyl-alpha-D-glucosamine: step 2/6. Catalyzes the hydrolysis of UDP-3-O-myristoyl-N-acetylglucosamine to form UDP-3-O-myristoylglucosamine and acetate, the committed step in lipid A biosynthesis. The polypeptide is UDP-3-O-acyl-N-acetylglucosamine deacetylase (Shigella boydii serotype 18 (strain CDC 3083-94 / BS512)).